The sequence spans 138 residues: ATP synthase epsilon chain (138 aa).

It belongs to the ATPase epsilon chain family. F-type ATPases have 2 components, CF(1) - the catalytic core - and CF(0) - the membrane proton channel. CF(1) has five subunits: alpha(3), beta(3), gamma(1), delta(1), epsilon(1). CF(0) has three main subunits: a, b and c.

Its subcellular location is the cell membrane. Produces ATP from ADP in the presence of a proton gradient across the membrane. The polypeptide is ATP synthase epsilon chain (Streptococcus suis (strain 98HAH33)).